Here is a 294-residue protein sequence, read N- to C-terminus: Proteasome subunit beta (294 aa).

Residues 1–65 (MTADRPALRT…MESGDLAPHG (65 aa)) constitute a propeptide, removed in mature form; by autocatalysis. The active-site Nucleophile is the Thr-66.

It belongs to the peptidase T1B family. The 20S proteasome core is composed of 14 alpha and 14 beta subunits that assemble into four stacked heptameric rings, resulting in a barrel-shaped structure. The two inner rings, each composed of seven catalytic beta subunits, are sandwiched by two outer rings, each composed of seven alpha subunits. The catalytic chamber with the active sites is on the inside of the barrel. Has a gated structure, the ends of the cylinder being occluded by the N-termini of the alpha-subunits. Is capped by the proteasome-associated ATPase, ARC.

It is found in the cytoplasm. The catalysed reaction is Cleavage of peptide bonds with very broad specificity.. It functions in the pathway protein degradation; proteasomal Pup-dependent pathway. The formation of the proteasomal ATPase ARC-20S proteasome complex, likely via the docking of the C-termini of ARC into the intersubunit pockets in the alpha-rings, may trigger opening of the gate for substrate entry. Interconversion between the open-gate and close-gate conformations leads to a dynamic regulation of the 20S proteasome proteolysis activity. In terms of biological role, component of the proteasome core, a large protease complex with broad specificity involved in protein degradation. This Rhodococcus jostii (strain RHA1) protein is Proteasome subunit beta.